The following is a 321-amino-acid chain: Altered inheritance of mitochondria protein 18, mitochondrial (321 aa).

A mitochondrion-targeting transit peptide spans 1-72 (MDRGRCANML…LLATSLYYRD (72 aa)).

The protein belongs to the AIM18/AIM46 family.

The protein resides in the mitochondrion. The chain is Altered inheritance of mitochondria protein 18, mitochondrial (AIM18) from Saccharomyces cerevisiae (strain AWRI1631) (Baker's yeast).